Here is a 192-residue protein sequence, read N- to C-terminus: Ion-translocating oxidoreductase complex subunit A (192 aa).

A run of 6 helical transmembrane segments spans residues 5–25 (LLLLISTVLVNNFVLVKFLGL), 39–59 (IGMSMATTFVLTLASILSYLV), 65–85 (LPFDLGYLRTMSFILVIAVVV), 102–122 (ALGIYLPLITTNCAVLGVALL), 134–154 (AIYGFGAAVGFSLVLILFSAM), and 171–191 (AIAMITAGLMSLAFMGFTGLV).

The protein belongs to the NqrDE/RnfAE family. The complex is composed of six subunits: RnfA, RnfB, RnfC, RnfD, RnfE and RnfG.

It localises to the cell inner membrane. Functionally, part of a membrane-bound complex that couples electron transfer with translocation of ions across the membrane. The polypeptide is Ion-translocating oxidoreductase complex subunit A (Shewanella oneidensis (strain ATCC 700550 / JCM 31522 / CIP 106686 / LMG 19005 / NCIMB 14063 / MR-1)).